The chain runs to 132 residues: NADH-quinone oxidoreductase subunit A 2 (132 aa).

The next 3 helical transmembrane spans lie at 10–30 (WALL…LGLG), 66–86 (LVAM…LWAV), and 93–113 (WAGF…LFYL).

It belongs to the complex I subunit 3 family. As to quaternary structure, NDH-1 is composed of 13 different subunits. Subunits NuoA, H, J, K, L, M, N constitute the membrane sector of the complex.

Its subcellular location is the cell inner membrane. It catalyses the reaction a quinone + NADH + 5 H(+)(in) = a quinol + NAD(+) + 4 H(+)(out). Its function is as follows. NDH-1 shuttles electrons from NADH, via FMN and iron-sulfur (Fe-S) centers, to quinones in the respiratory chain. The immediate electron acceptor for the enzyme in this species is believed to be ubiquinone. Couples the redox reaction to proton translocation (for every two electrons transferred, four hydrogen ions are translocated across the cytoplasmic membrane), and thus conserves the redox energy in a proton gradient. The protein is NADH-quinone oxidoreductase subunit A 2 of Pseudomonas aeruginosa (strain UCBPP-PA14).